The chain runs to 554 residues: Urocanate hydratase (554 aa).

Residues 50 to 51 (GG), Gln128, 174 to 176 (GMG), Glu194, Arg199, 240 to 241 (NA), 261 to 265 (QTSAH), 271 to 272 (YI), and Tyr320 contribute to the NAD(+) site. Cys408 is an active-site residue. Gly490 is a binding site for NAD(+).

Belongs to the urocanase family. It depends on NAD(+) as a cofactor.

The protein localises to the cytoplasm. The enzyme catalyses 4-imidazolone-5-propanoate = trans-urocanate + H2O. Its pathway is amino-acid degradation; L-histidine degradation into L-glutamate; N-formimidoyl-L-glutamate from L-histidine: step 2/3. In terms of biological role, catalyzes the conversion of urocanate to 4-imidazolone-5-propionate. This is Urocanate hydratase from Rubrobacter xylanophilus (strain DSM 9941 / JCM 11954 / NBRC 16129 / PRD-1).